Reading from the N-terminus, the 184-residue chain is Large ribosomal subunit protein uL6 (184 aa).

It belongs to the universal ribosomal protein uL6 family. In terms of assembly, part of the 50S ribosomal subunit.

Its function is as follows. This protein binds to the 23S rRNA, and is important in its secondary structure. It is located near the subunit interface in the base of the L7/L12 stalk, and near the tRNA binding site of the peptidyltransferase center. In Pseudothermotoga lettingae (strain ATCC BAA-301 / DSM 14385 / NBRC 107922 / TMO) (Thermotoga lettingae), this protein is Large ribosomal subunit protein uL6.